Consider the following 472-residue polypeptide: Uronate isomerase (472 aa).

This sequence belongs to the metallo-dependent hydrolases superfamily. Uronate isomerase family.

The catalysed reaction is D-glucuronate = D-fructuronate. It carries out the reaction aldehydo-D-galacturonate = keto-D-tagaturonate. It participates in carbohydrate metabolism; pentose and glucuronate interconversion. In Nostoc punctiforme (strain ATCC 29133 / PCC 73102), this protein is Uronate isomerase.